A 199-amino-acid chain; its full sequence is Protein GrpE (199 aa).

The interval 1-27 (MSEQNTNHESPEQNVAHDNIEHSDSIL) is disordered. Residues 18-27 (DNIEHSDSIL) show a composition bias toward basic and acidic residues.

This sequence belongs to the GrpE family. Homodimer.

The protein localises to the cytoplasm. Functionally, participates actively in the response to hyperosmotic and heat shock by preventing the aggregation of stress-denatured proteins, in association with DnaK and GrpE. It is the nucleotide exchange factor for DnaK and may function as a thermosensor. Unfolded proteins bind initially to DnaJ; upon interaction with the DnaJ-bound protein, DnaK hydrolyzes its bound ATP, resulting in the formation of a stable complex. GrpE releases ADP from DnaK; ATP binding to DnaK triggers the release of the substrate protein, thus completing the reaction cycle. Several rounds of ATP-dependent interactions between DnaJ, DnaK and GrpE are required for fully efficient folding. The protein is Protein GrpE of Psychrobacter sp. (strain St1).